We begin with the raw amino-acid sequence, 250 residues long: Geranylgeranylglyceryl phosphate synthase (250 aa).

Positions 23 and 52 each coordinate Mg(2+). Sn-glycerol 1-phosphate-binding positions include 170 to 176, 202 to 203, and 224 to 225; these read YIEAGSG, GG, and GT.

It belongs to the GGGP/HepGP synthase family. Group II subfamily. Mg(2+) serves as cofactor.

The protein resides in the cytoplasm. It carries out the reaction sn-glycerol 1-phosphate + (2E,6E,10E)-geranylgeranyl diphosphate = sn-3-O-(geranylgeranyl)glycerol 1-phosphate + diphosphate. It participates in membrane lipid metabolism; glycerophospholipid metabolism. Its function is as follows. Prenyltransferase that catalyzes the transfer of the geranylgeranyl moiety of geranylgeranyl diphosphate (GGPP) to the C3 hydroxyl of sn-glycerol-1-phosphate (G1P). This reaction is the first ether-bond-formation step in the biosynthesis of archaeal membrane lipids. This chain is Geranylgeranylglyceryl phosphate synthase, found in Methanobrevibacter smithii (strain ATCC 35061 / DSM 861 / OCM 144 / PS).